A 352-amino-acid chain; its full sequence is Glycerol-1-phosphate dehydrogenase [NAD(P)+] (352 aa).

NAD(+) contacts are provided by residues 99-103 and 121-124; these read GAKID and TAPS. Asp126 lines the substrate pocket. Residue Ser130 coordinates NAD(+). Asp173 contributes to the substrate binding site. Residues Asp173 and His253 each coordinate Zn(2+). Residue His257 participates in substrate binding. A Zn(2+)-binding site is contributed by His269.

Belongs to the glycerol-1-phosphate dehydrogenase family. It depends on Zn(2+) as a cofactor.

It is found in the cytoplasm. The enzyme catalyses sn-glycerol 1-phosphate + NAD(+) = dihydroxyacetone phosphate + NADH + H(+). It catalyses the reaction sn-glycerol 1-phosphate + NADP(+) = dihydroxyacetone phosphate + NADPH + H(+). The protein operates within membrane lipid metabolism; glycerophospholipid metabolism. Its function is as follows. Catalyzes the NAD(P)H-dependent reduction of dihydroxyacetonephosphate (DHAP or glycerone phosphate) to glycerol 1-phosphate (G1P). The G1P thus generated is used as the glycerophosphate backbone of phospholipids in the cellular membranes of Archaea. In Thermoplasma acidophilum (strain ATCC 25905 / DSM 1728 / JCM 9062 / NBRC 15155 / AMRC-C165), this protein is Glycerol-1-phosphate dehydrogenase [NAD(P)+].